The sequence spans 633 residues: ATP-dependent RNA helicase mrh4, mitochondrial (633 aa).

Residues 1-38 (MNRLGRLSLPLRPQVCLLCQTQATMSSPLAGWQAVRSM) constitute a mitochondrion transit peptide. A disordered region spans residues 50–115 (MVLSSNVDKS…KQKPDSPLYK (66 aa)). The segment covering 52–63 (LSSNVDKSSLKQ) has biased composition (polar residues). Residues 98–109 (RSGDSEDDKQKP) are compositionally biased toward basic and acidic residues. The short motif at 142–175 (SSFDQFPLLPVVRHSISSQALSRTGDIVPTPIQR) is the Q motif element. The region spanning 195-407 (SDHEPNFEQY…RKRYPDIRRL (213 aa)) is the Helicase ATP-binding domain. 208-215 (AETGSGKT) provides a ligand contact to ATP. Residues 354 to 357 (DEAD) carry the DEAD box motif. A Helicase C-terminal domain is found at 458 to 633 (FLAQAGPKVK…EGMFRGQALI (176 aa)).

The protein belongs to the DEAD box helicase family. MRH4 subfamily.

Its subcellular location is the mitochondrion. The catalysed reaction is ATP + H2O = ADP + phosphate + H(+). ATP-binding RNA helicase involved in mitochondrial RNA metabolism. Required for maintenance of mitochondrial DNA. The polypeptide is ATP-dependent RNA helicase mrh4, mitochondrial (mrh4) (Aspergillus niger (strain ATCC MYA-4892 / CBS 513.88 / FGSC A1513)).